The sequence spans 370 residues: Fe(2+) transport protein 2 (370 aa).

Residues 1-25 (MMMSSSQTPVRIAFVFLVILAATDA) form the signal peptide. The Extracellular portion of the chain corresponds to 26-55 (HSDHRTPPPACGGAAVGGECHSVARALRLK). Residues 56–76 (LIAIPAILAASVAGVCLPLFA) traverse the membrane as a helical segment. At 77–85 (RSVPALRPD) the chain is on the cytoplasmic side. The chain crosses the membrane as a helical span at residues 86–106 (GGLFAVVKAFASGVILGTGYM). Residues 107–130 (HVLPDSFNDLTSPCLPRKPWSEFP) are Extracellular-facing. Residues 131–151 (FAAFVAMLAAVFTLMVDSLML) traverse the membrane as a helical segment. At 152–215 (TFHTRGSKGR…TTKAQLLRNR (64 aa)) the chain is on the cytoplasmic side. A helical membrane pass occupies residues 216–236 (VIVQVLEMGIVVHSVVIGLGM). The Extracellular portion of the chain corresponds to 237-247 (GASQNVCTIRP). Residues 248–268 (LVAALCFHQMFEGMGLGGCIL) traverse the membrane as a helical segment. At 269 to 278 (QAGYGGRTRS) the chain is on the cytoplasmic side. Residues 279 to 299 (ALVFFFSTTTPFGIALGLALT) form a helical membrane-spanning segment. Residues 300–309 (RVYSDSSPTA) are Extracellular-facing. Residues 310–330 (LVVVGLLNAASAGLLHYMALV) form a helical membrane-spanning segment. Topologically, residues 331–349 (ELLAADFMGPKLQGNVRLQ) are cytoplasmic. Residues 350–370 (LAASLAILLGAGGMSVMAKWA) form a helical membrane-spanning segment.

This sequence belongs to the ZIP transporter (TC 2.A.5) family.

It localises to the cell membrane. Iron transporter that may play a role in the uptake of iron from the rhizosphere across the plasma membrane in the root epidermal layer. This is Fe(2+) transport protein 2 (IRT2) from Oryza sativa subsp. japonica (Rice).